Reading from the N-terminus, the 97-residue chain is Integration host factor subunit alpha (97 aa).

A disordered region spans residues Phe49 to Ile71.

Belongs to the bacterial histone-like protein family. In terms of assembly, heterodimer of an alpha and a beta chain.

In terms of biological role, this protein is one of the two subunits of integration host factor, a specific DNA-binding protein that functions in genetic recombination as well as in transcriptional and translational control. In Shewanella woodyi (strain ATCC 51908 / MS32), this protein is Integration host factor subunit alpha.